The following is a 380-amino-acid chain: Cytochrome b (380 aa).

The next 4 membrane-spanning stretches (helical) occupy residues 33 to 53 (FGSL…FLAM), 77 to 98 (WLIR…FLHV), 113 to 133 (WNMG…GYVL), and 178 to 198 (FFAF…VHLL). 2 residues coordinate heme b: His-83 and His-97. Residues His-182 and His-196 each contribute to the heme b site. Position 201 (His-201) interacts with a ubiquinone. 4 helical membrane passes run 226 to 246 (IKDF…TLFF), 288 to 308 (LGGV…PLLH), 320 to 340 (ITQT…WIGG), and 347 to 367 (FIII…ILMP).

This sequence belongs to the cytochrome b family. In terms of assembly, the cytochrome bc1 complex contains 11 subunits: 3 respiratory subunits (MT-CYB, CYC1 and UQCRFS1), 2 core proteins (UQCRC1 and UQCRC2) and 6 low-molecular weight proteins (UQCRH/QCR6, UQCRB/QCR7, UQCRQ/QCR8, UQCR10/QCR9, UQCR11/QCR10 and a cleavage product of UQCRFS1). This cytochrome bc1 complex then forms a dimer. The cofactor is heme b.

The protein resides in the mitochondrion inner membrane. In terms of biological role, component of the ubiquinol-cytochrome c reductase complex (complex III or cytochrome b-c1 complex) that is part of the mitochondrial respiratory chain. The b-c1 complex mediates electron transfer from ubiquinol to cytochrome c. Contributes to the generation of a proton gradient across the mitochondrial membrane that is then used for ATP synthesis. This is Cytochrome b (MT-CYB) from Microtus guentheri (Gunther's vole).